Consider the following 166-residue polypeptide: uncharacterized protein (166 aa).

This is an uncharacterized protein from Schizosaccharomyces pombe (strain 972 / ATCC 24843) (Fission yeast).